The chain runs to 634 residues: Chaperone protein DnaK 2 (634 aa).

At T197 the chain carries Phosphothreonine; by autocatalysis. Low complexity predominate over residues 600–620 (ASAEASANAQAGPSSSSSSSS). A disordered region spans residues 600–634 (ASAEASANAQAGPSSSSSSSSGDDDVIDAEFSESK). The span at 621–634 (GDDDVIDAEFSESK) shows a compositional bias: acidic residues.

This sequence belongs to the heat shock protein 70 family.

Functionally, acts as a chaperone. The sequence is that of Chaperone protein DnaK 2 from Synechococcus sp. (strain ATCC 27144 / PCC 6301 / SAUG 1402/1) (Anacystis nidulans).